The following is a 462-amino-acid chain: tRNA modification GTPase MnmE (462 aa).

Arg-23, Glu-88, and Arg-127 together coordinate (6S)-5-formyl-5,6,7,8-tetrahydrofolate. The TrmE-type G domain maps to 224–383 (GLATVIIGRP…LEKAIADLFF (160 aa)). Asn-234 is a binding site for K(+). GTP is bound by residues 234–239 (NVGKSS), 253–259 (TDIPGTT), and 278–281 (DTAG). Ser-238 contacts Mg(2+). 3 residues coordinate K(+): Thr-253, Ile-255, and Thr-258. Thr-259 serves as a coordination point for Mg(2+). A (6S)-5-formyl-5,6,7,8-tetrahydrofolate-binding site is contributed by Lys-462.

This sequence belongs to the TRAFAC class TrmE-Era-EngA-EngB-Septin-like GTPase superfamily. TrmE GTPase family. Homodimer. Heterotetramer of two MnmE and two MnmG subunits. K(+) serves as cofactor.

Its subcellular location is the cytoplasm. Exhibits a very high intrinsic GTPase hydrolysis rate. Involved in the addition of a carboxymethylaminomethyl (cmnm) group at the wobble position (U34) of certain tRNAs, forming tRNA-cmnm(5)s(2)U34. This is tRNA modification GTPase MnmE from Geobacillus kaustophilus (strain HTA426).